The primary structure comprises 823 residues: Apoptosis-resistant E3 ubiquitin protein ligase 1 (823 aa).

The stretch at 52 to 158 (GNYLDPRSCK…VAYSPYYKIF (107 aa)) is one Filamin repeat. A disordered region spans residues 315 to 345 (PPMHMTSSQRRPSTAVDEEDEDSPSECHTPE). An interaction with SOCS2 region spans residues 483–789 (SISDWSKNFE…THSTLPTAHT (307 aa)). In terms of domain architecture, HECT spans 483-823 (SISDWSKNFE…SEGCEGFGML (341 aa)). Catalysis depends on Cys790, which acts as the Glycyl thioester intermediate.

As to quaternary structure, interacts with SOCS2. Interacts (via HECT domain) with HTRA2, DIABLO/SMAC and SEPTIN4; in the cytoplasm following induction of apoptosis. Autoubiquitinated in vitro in the presence of E2 enzyme UBE2D1/UBCH5A.

It catalyses the reaction S-ubiquitinyl-[E2 ubiquitin-conjugating enzyme]-L-cysteine + [acceptor protein]-L-lysine = [E2 ubiquitin-conjugating enzyme]-L-cysteine + N(6)-ubiquitinyl-[acceptor protein]-L-lysine.. The protein operates within protein modification; protein ubiquitination. Functionally, E3 ubiquitin-protein ligase that catalyzes 'Lys-11'- or 'Lys-33'-linked polyubiquitin chains, with some preference for 'Lys-33' linkages. E3 ubiquitin-protein ligases accept ubiquitin from an E2 ubiquitin-conjugating enzyme in the form of a thioester and then directly transfers the ubiquitin to targeted substrates. Ubiquitinates SEPTIN4, DIABLO/SMAC and HTRA2 in vitro. Modulates pulmonary inflammation by targeting SOCS2 for ubiquitination and subsequent degradation by the proteasome. This is Apoptosis-resistant E3 ubiquitin protein ligase 1 from Homo sapiens (Human).